Consider the following 641-residue polypeptide: MDGSGPFSCPICLEPLREPVTLPCGHNFCLACLGALWPHRSAGGTGGSGGPARCPLCQEPFPDGLQLRKNHTLSELLQLRQGSVPGPMSAPASGSTRGATPEPSAPSAPPPAPEPSAPCAPEQWPAGEEPVRCDACPEGAALPAALSCLSCLASFCSAHLAPHERSPALRGHRLVPPLRRLEESLCPRHLRPLERYCRVERVCLCEACATQDHRGHELVPLEQERALQEVEQSKVLSAAEDRMDELGAGIAQSRRTVALIKSAAVAERERVSQMFAEATATLQSFQNEVMGFIEEGEATMLGRSQGDLRRQEEQRSRLSKARHNLGQVPEADSVSFLQELLALRLALEEGCGPGPGPPRELSFTKSSQVVKAVRDTLISACASQWEQLRGLGSNEDGLQKLGSEDVESQDPDSTSLLESEAPRDYFLKFAYIVDLDSDTADKFLQLFGTKGVKRVLCPINYPESPTRFTHCEQVLGEGALDRGTYYWEVEIIEGWVSVGVMAEGFSPQEPYDRGRLGRNAHSCCLQWNGRGFSVWFCGLEAPLPHAFSPTVGVCLEYADHALAFYAVRDGKLSLLRRLKASRPRRSGALASPTDPFQSRLDSHFSGLFNHRLKPAFFLESVDAHLQIGPLKKSCITVLKRR.

An RING-type zinc finger spans residues 9-58 (CPICLEPLREPVTLPCGHNFCLACLGALWPHRSAGGTGGSGGPARCPLCQ). At Thr72 the chain carries Phosphothreonine. The interval 81-123 (QGSVPGPMSAPASGSTRGATPEPSAPSAPPPAPEPSAPCAPEQ) is disordered. Residues 103–118 (PSAPSAPPPAPEPSAP) are compositionally biased toward pro residues. A B box-type zinc finger spans residues 181–221 (LEESLCPRHLRPLERYCRVERVCLCEACATQDHRGHELVPL). Residues Cys186, His189, Cys208, and His213 each contribute to the Zn(2+) site. A coiled-coil region spans residues 305–325 (QGDLRRQEEQRSRLSKARHNL). Ser393 is modified (phosphoserine). The disordered stretch occupies residues 396-416 (DGLQKLGSEDVESQDPDSTSL). Residues 413 to 634 (STSLLESEAP…LQIGPLKKSC (222 aa)) form the B30.2/SPRY domain. At Ser464 the chain carries Phosphoserine. An Omega-N-methylarginine modification is found at Arg585. Position 591 is a phosphoserine (Ser591).

Belongs to the TRIM/RBCC family. As to expression, expressed in hepatocytes, expression is increased in fatty livers.

Its subcellular location is the cytoplasm. It localises to the nucleus. The enzyme catalyses S-ubiquitinyl-[E2 ubiquitin-conjugating enzyme]-L-cysteine + [acceptor protein]-L-lysine = [E2 ubiquitin-conjugating enzyme]-L-cysteine + N(6)-ubiquitinyl-[acceptor protein]-L-lysine.. Its pathway is protein modification; protein ubiquitination. In terms of biological role, E3 ubiquitin-protein ligase that mediates the ubiquitination and proteasomal degradation of CYLD. This Mus musculus (Mouse) protein is E3 ubiquitin-protein ligase TRIM47.